A 3660-amino-acid polypeptide reads, in one-letter code: Dystrophin (3660 aa).

The segment at M1–P244 is actin-binding. 2 Calponin-homology (CH) domains span residues D19–Q123 and T138–P244. Spectrin repeat units lie at residues M341 to K449, I450 to D558, R561 to Q669, E721 to Y830, N832 to T936, R945 to D1047, T1050 to G1156, D1159 to E1265, A1268 to Q1369, E1470 to K1570, K1573 to E1678, K1681 to L1782, H1879 to E1981, L2013 to K2103, E2106 to E2211, N2214 to I2321, F2472 to E2574, K2577 to S2683, L2686 to A2799, D2802 to Q2904, D2906 to D2928, and E2931 to E3037. One can recognise a WW domain in the interval T3052–M3085. A ZZ-type; degenerate zinc finger spans residues K3305–T3361. C3310, C3313, C3334, and C3337 together coordinate Zn(2+). 2 disordered regions span residues K3503–Q3526 and P3575–M3660. Polar residues-rich tracts occupy residues N3582–P3601 and Q3637–G3647.

It is found in the cell membrane. It localises to the sarcolemma. The protein localises to the cytoplasm. Its subcellular location is the cytoskeleton. The protein resides in the postsynaptic cell membrane. In terms of biological role, may play a role in anchoring the cytoskeleton to the plasma membrane. This Gallus gallus (Chicken) protein is Dystrophin (DMD).